Here is a 193-residue protein sequence, read N- to C-terminus: Large ribosomal subunit protein uL5 (193 aa).

Belongs to the universal ribosomal protein uL5 family. Part of the 50S ribosomal subunit; part of the 5S rRNA/L5/L18/L25 subcomplex. Contacts the 5S rRNA and the P site tRNA. Forms a bridge to the 30S subunit in the 70S ribosome.

Functionally, this is one of the proteins that bind and probably mediate the attachment of the 5S RNA into the large ribosomal subunit, where it forms part of the central protuberance. In the 70S ribosome it contacts protein S13 of the 30S subunit (bridge B1b), connecting the 2 subunits; this bridge is implicated in subunit movement. Contacts the P site tRNA; the 5S rRNA and some of its associated proteins might help stabilize positioning of ribosome-bound tRNAs. The chain is Large ribosomal subunit protein uL5 from Corynebacterium urealyticum (strain ATCC 43042 / DSM 7109).